The following is a 115-amino-acid chain: Large ribosomal subunit protein bL19 (115 aa).

The protein belongs to the bacterial ribosomal protein bL19 family.

In terms of biological role, this protein is located at the 30S-50S ribosomal subunit interface and may play a role in the structure and function of the aminoacyl-tRNA binding site. The polypeptide is Large ribosomal subunit protein bL19 (Syntrophotalea carbinolica (strain DSM 2380 / NBRC 103641 / GraBd1) (Pelobacter carbinolicus)).